The following is a 331-amino-acid chain: Ketol-acid reductoisomerase (NADP(+)) (331 aa).

Positions 2 to 182 constitute a KARI N-terminal Rossmann domain; sequence ARMYYDEDAN…GGTRGGVLET (181 aa). NADP(+)-binding positions include 25-28, Ser-51, Ser-53, and 83-86; these read YGSQ and DEVQ. Residue His-108 is part of the active site. Gly-134 lines the NADP(+) pocket. One can recognise a KARI C-terminal knotted domain in the interval 183 to 328; that stretch reads TFREETETDL…KDLRAMFSWL (146 aa). The Mg(2+) site is built by Asp-191, Glu-195, Glu-227, and Glu-231. Ser-252 is a binding site for substrate.

It belongs to the ketol-acid reductoisomerase family. Mg(2+) serves as cofactor.

The catalysed reaction is (2R)-2,3-dihydroxy-3-methylbutanoate + NADP(+) = (2S)-2-acetolactate + NADPH + H(+). The enzyme catalyses (2R,3R)-2,3-dihydroxy-3-methylpentanoate + NADP(+) = (S)-2-ethyl-2-hydroxy-3-oxobutanoate + NADPH + H(+). Its pathway is amino-acid biosynthesis; L-isoleucine biosynthesis; L-isoleucine from 2-oxobutanoate: step 2/4. It functions in the pathway amino-acid biosynthesis; L-valine biosynthesis; L-valine from pyruvate: step 2/4. Functionally, involved in the biosynthesis of branched-chain amino acids (BCAA). Catalyzes an alkyl-migration followed by a ketol-acid reduction of (S)-2-acetolactate (S2AL) to yield (R)-2,3-dihydroxy-isovalerate. In the isomerase reaction, S2AL is rearranged via a Mg-dependent methyl migration to produce 3-hydroxy-3-methyl-2-ketobutyrate (HMKB). In the reductase reaction, this 2-ketoacid undergoes a metal-dependent reduction by NADPH to yield (R)-2,3-dihydroxy-isovalerate. This chain is Ketol-acid reductoisomerase (NADP(+)), found in Trichormus variabilis (strain ATCC 29413 / PCC 7937) (Anabaena variabilis).